The sequence spans 817 residues: Leucine--tRNA ligase (817 aa).

Residues 42 to 52 (PYPSGKLHMGH) carry the 'HIGH' region motif. The short motif at 576–580 (KMSKS) is the 'KMSKS' region element. Lysine 579 provides a ligand contact to ATP.

The protein belongs to the class-I aminoacyl-tRNA synthetase family.

It localises to the cytoplasm. It carries out the reaction tRNA(Leu) + L-leucine + ATP = L-leucyl-tRNA(Leu) + AMP + diphosphate. In Methylobacillus flagellatus (strain ATCC 51484 / DSM 6875 / VKM B-1610 / KT), this protein is Leucine--tRNA ligase.